A 240-amino-acid chain; its full sequence is Pathogenesis-related thaumatin-like protein 3.5 (240 aa).

A signal peptide spans 1-20 (MASLRLATLAMMVLFGSCRA). Intrachain disulfides connect C31–C237, C79–C89, C94–C100, C145–C227, C150–C210, C158–C173, C177–C186, and C187–C197.

This sequence belongs to the thaumatin family. As to expression, strongly expressed in pollen grains. Also present at weak levels in seedling roots, in sapling stems and in developing male strobili.

Functionally, may be involved in disease resistance. The protein is Pathogenesis-related thaumatin-like protein 3.5 of Cryptomeria japonica (Japanese cedar).